A 287-amino-acid polypeptide reads, in one-letter code: Bifunctional protein FolD (287 aa).

NADP(+) is bound by residues 165-167, Thr-192, and Val-233; that span reads GRG.

Belongs to the tetrahydrofolate dehydrogenase/cyclohydrolase family. In terms of assembly, homodimer.

It carries out the reaction (6R)-5,10-methylene-5,6,7,8-tetrahydrofolate + NADP(+) = (6R)-5,10-methenyltetrahydrofolate + NADPH. The catalysed reaction is (6R)-5,10-methenyltetrahydrofolate + H2O = (6R)-10-formyltetrahydrofolate + H(+). It participates in one-carbon metabolism; tetrahydrofolate interconversion. In terms of biological role, catalyzes the oxidation of 5,10-methylenetetrahydrofolate to 5,10-methenyltetrahydrofolate and then the hydrolysis of 5,10-methenyltetrahydrofolate to 10-formyltetrahydrofolate. The chain is Bifunctional protein FolD from Cutibacterium acnes (strain DSM 16379 / KPA171202) (Propionibacterium acnes).